Here is a 76-residue protein sequence, read N- to C-terminus: Acyl carrier protein (76 aa).

Residues 1 to 74 enclose the Carrier domain; that stretch reads MEERIKEIIA…DVINYIKEKK (74 aa). Position 34 is an O-(pantetheine 4'-phosphoryl)serine (serine 34).

It belongs to the acyl carrier protein (ACP) family. Post-translationally, 4'-phosphopantetheine is transferred from CoA to a specific serine of apo-ACP by AcpS. This modification is essential for activity because fatty acids are bound in thioester linkage to the sulfhydryl of the prosthetic group.

The protein localises to the cytoplasm. Its pathway is lipid metabolism; fatty acid biosynthesis. Its function is as follows. Carrier of the growing fatty acid chain in fatty acid biosynthesis. The protein is Acyl carrier protein of Persephonella marina (strain DSM 14350 / EX-H1).